Here is a 791-residue protein sequence, read N- to C-terminus: MASLSESEGTNRGSMWELDQNLDQPMDEEASRLKNMYREKKFSSLLLLRLAFQSLGVVFGDLGTSPLYVFYNAFPHGVDDEEDVIGALSLIIYTLTLIPLLKYVFVVLRANDNGQGGTFALYSLLCRHAKISTIPNQHKTDEDLTTYSRQTYEENSVGAKIKRWLEAHAYKRNCLLIVVLIGTCTAIGDGILTPAISVLSASGGIKVQNPNMSTDVVVIVSVIILIGLFSMQHYGTDKVGWLFAPIVLLWFILIGSVGALNIHKYKGSVLKAYNPVYIYRYFQRRNSDSWASLGGIMLSITGTEALFADLCHFPVFAIQIAFTLIVFPCLLLAYTGQAAYIIAHKDHVADAFYRSIPDSIYWPAFVIATAAAIVASQATISATYSIIKQALALGCFPRVKIVHTSKKFLGQIYIPDINWVLLILCIAVTAGFKNQSQIGNAYGTAVVIVMLVTTFLMVPIMLLVWKSHWILVVTFIVLSLMVEIPYFSACLLKIDQGGWVPLVIATAFFIIMYVWHFCTVKRYEFEMHSKVSMAWILGLGPSLGLVRVPGIGFVYTELASGVPHIFSHFITNLPAIHSVVVFVCVKYLPVYTVPMDERFLVRRIGPKNFHIFRCVARYGYKDLHKKDEDFEKMLFNCLLSFLRLESMMEGYSDSDDFSVPEQRTEGSISNAFLAEKTNNNTMCSNGDLSYSSQDSIVPVQSPLRGNSLLRYSSQASHTVSDELEFLNRCKDAGVVHILGNTIVLARRDSGIIKKIAVNYMYAFMRKICRENSVIFNVPHESLLNVGQIYYI.

Topologically, residues 1–49 (MASLSESEGTNRGSMWELDQNLDQPMDEEASRLKNMYREKKFSSLLLLR) are cytoplasmic. A helical transmembrane segment spans residues 50–70 (LAFQSLGVVFGDLGTSPLYVF). Topologically, residues 71 to 87 (YNAFPHGVDDEEDVIGA) are extracellular. Residues 88-108 (LSLIIYTLTLIPLLKYVFVVL) form a helical membrane-spanning segment. Residues 109-175 (RANDNGQGGT…EAHAYKRNCL (67 aa)) are Cytoplasmic-facing. Residues 176–196 (LIVVLIGTCTAIGDGILTPAI) traverse the membrane as a helical segment. The Extracellular segment spans residues 197 to 215 (SVLSASGGIKVQNPNMSTD). N-linked (GlcNAc...) asparagine glycosylation is present at Asn-211. A helical membrane pass occupies residues 216-236 (VVVIVSVIILIGLFSMQHYGT). The Cytoplasmic segment spans residues 237-238 (DK). Residues 239–259 (VGWLFAPIVLLWFILIGSVGA) traverse the membrane as a helical segment. Topologically, residues 260-289 (LNIHKYKGSVLKAYNPVYIYRYFQRRNSDS) are extracellular. The helical transmembrane segment at 290 to 310 (WASLGGIMLSITGTEALFADL) threads the bilayer. The Cytoplasmic segment spans residues 311–315 (CHFPV). A helical transmembrane segment spans residues 316–338 (FAIQIAFTLIVFPCLLLAYTGQA). The Extracellular portion of the chain corresponds to 339–359 (AYIIAHKDHVADAFYRSIPDS). A helical transmembrane segment spans residues 360 to 380 (IYWPAFVIATAAAIVASQATI). Residues 381–411 (SATYSIIKQALALGCFPRVKIVHTSKKFLGQ) are Cytoplasmic-facing. Residues 412–432 (IYIPDINWVLLILCIAVTAGF) traverse the membrane as a helical segment. The Extracellular segment spans residues 433–444 (KNQSQIGNAYGT). Residue Asn-434 is glycosylated (N-linked (GlcNAc...) asparagine). The helical transmembrane segment at 445-465 (AVVIVMLVTTFLMVPIMLLVW) threads the bilayer. At 466–468 (KSH) the chain is on the cytoplasmic side. A helical transmembrane segment spans residues 469 to 489 (WILVVTFIVLSLMVEIPYFSA). The Extracellular segment spans residues 490-496 (CLLKIDQ). Residues 497-517 (GGWVPLVIATAFFIIMYVWHF) form a helical membrane-spanning segment. At 518–791 (CTVKRYEFEM…LLNVGQIYYI (274 aa)) the chain is on the cytoplasmic side.

This sequence belongs to the HAK/KUP transporter (TC 2.A.72.3) family.

It localises to the membrane. Its function is as follows. High-affinity potassium transporter. The chain is Probable potassium transporter 11 from Oryza sativa subsp. japonica (Rice).